The sequence spans 159 residues: Ribosomal RNA large subunit methyltransferase H (159 aa).

S-adenosyl-L-methionine-binding positions include Leu-76, Gly-108, and 127–132 (FSHMTF).

Belongs to the RNA methyltransferase RlmH family. Homodimer.

It is found in the cytoplasm. The enzyme catalyses pseudouridine(1915) in 23S rRNA + S-adenosyl-L-methionine = N(3)-methylpseudouridine(1915) in 23S rRNA + S-adenosyl-L-homocysteine + H(+). In terms of biological role, specifically methylates the pseudouridine at position 1915 (m3Psi1915) in 23S rRNA. This is Ribosomal RNA large subunit methyltransferase H from Halothermothrix orenii (strain H 168 / OCM 544 / DSM 9562).